We begin with the raw amino-acid sequence, 269 residues long: Hydroxyethylthiazole kinase (269 aa).

Residue methionine 48 coordinates substrate. Lysine 124 and threonine 170 together coordinate ATP. Glycine 197 serves as a coordination point for substrate.

It belongs to the Thz kinase family. Requires Mg(2+) as cofactor.

The catalysed reaction is 5-(2-hydroxyethyl)-4-methylthiazole + ATP = 4-methyl-5-(2-phosphooxyethyl)-thiazole + ADP + H(+). It participates in cofactor biosynthesis; thiamine diphosphate biosynthesis; 4-methyl-5-(2-phosphoethyl)-thiazole from 5-(2-hydroxyethyl)-4-methylthiazole: step 1/1. Functionally, catalyzes the phosphorylation of the hydroxyl group of 4-methyl-5-beta-hydroxyethylthiazole (THZ). This chain is Hydroxyethylthiazole kinase, found in Clostridium kluyveri (strain NBRC 12016).